Consider the following 567-residue polypeptide: Delta(24)-sterol reductase (567 aa).

At 1-24 (MSDLEAPLRPKRKKIWVDYFVKFR) the chain is on the lumenal side. The helical; Signal-anchor transmembrane segment at 25-45 (WILVIFVVLPISFTLYFLTYL) threads the bilayer. The FAD-binding PCMH-type domain occupies 45–231 (LGDVRSEWKS…VAAEVKLIPI (187 aa)). Residues 46 to 567 (GDVRSEWKSF…AYPEVDQPPD (522 aa)) lie on the Cytoplasmic side of the membrane. Residues 520-541 (CRRKYGAVGTFMSVYYKCKKGR) are interaction with calmodulin. A disordered region spans residues 548 to 567 (REAEQAHLDTAYPEVDQPPD).

The protein belongs to the DIMINUTO family. Highly expressed in the apical region and root tips and lower levels in immature and mature internodes and leaves.

It is found in the membrane. The enzyme catalyses lathosterol + NADP(+) = 5alpha-cholesta-7,24-dien-3beta-ol + NADPH + H(+). In terms of biological role, plays a critical role in the general process of plant cell elongation. This Pisum sativum (Garden pea) protein is Delta(24)-sterol reductase (DIM).